A 331-amino-acid polypeptide reads, in one-letter code: Biotin synthase (331 aa).

The Radical SAM core domain occupies 53–271 (TELQLSQLLS…IAVARIVCPK (219 aa)). [4Fe-4S] cluster contacts are provided by Cys68, Cys72, and Cys75. Positions 112, 143, 203, and 275 each coordinate [2Fe-2S] cluster.

Belongs to the radical SAM superfamily. Biotin synthase family. Homodimer. [4Fe-4S] cluster is required as a cofactor. The cofactor is [2Fe-2S] cluster.

The enzyme catalyses (4R,5S)-dethiobiotin + (sulfur carrier)-SH + 2 reduced [2Fe-2S]-[ferredoxin] + 2 S-adenosyl-L-methionine = (sulfur carrier)-H + biotin + 2 5'-deoxyadenosine + 2 L-methionine + 2 oxidized [2Fe-2S]-[ferredoxin]. It functions in the pathway cofactor biosynthesis; biotin biosynthesis; biotin from 7,8-diaminononanoate: step 2/2. Its function is as follows. Catalyzes the conversion of dethiobiotin (DTB) to biotin by the insertion of a sulfur atom into dethiobiotin via a radical-based mechanism. This chain is Biotin synthase, found in Phenylobacterium zucineum (strain HLK1).